The sequence spans 162 residues: RNA pyrophosphohydrolase (162 aa).

Residues 7 to 149 form the Nudix hydrolase domain; that stretch reads EYRPCVGIML…KKEVYKKVIE (143 aa). Positions 40 to 61 match the Nudix box motif; sequence GGVDEGEELEQAALRELLEEVG.

The protein belongs to the Nudix hydrolase family. RppH subfamily. The cofactor is a divalent metal cation.

Accelerates the degradation of transcripts by removing pyrophosphate from the 5'-end of triphosphorylated RNA, leading to a more labile monophosphorylated state that can stimulate subsequent ribonuclease cleavage. This is RNA pyrophosphohydrolase from Wolbachia pipientis subsp. Culex pipiens (strain wPip).